The primary structure comprises 454 residues: Aquaglyceroporin-9 (454 aa).

Over 1–186 (MEGGLRSPLN…RHTMREPFSE (186 aa)) the chain is Cytoplasmic. Residues 187–207 (FFGVFILILFGDGVVAQVVLS) traverse the membrane as a helical segment. Topologically, residues 208-216 (SGERGSYQS) are extracellular. Residues 217 to 237 (ISWGWGIGVMLGVYASGVSGA) traverse the membrane as a helical segment. At 238-257 (HINPAVTFANCIFRKFPWRK) the chain is on the cytoplasmic side. The NPA 1 motif lies at 240–242 (NPA). A helical transmembrane segment spans residues 258–278 (FPIYMLAQVLGAMCASGVVYA). Residues 279 to 316 (NYKSAIDMFEGGNNIRTVGLNTSSAGIFCTYPAPFMTK) lie on the Extracellular side of the membrane. Residue N299 is glycosylated (N-linked (GlcNAc...) asparagine). The helical transmembrane segment at 317–337 (TGQFFSEFVASTILMFCIYAL) threads the bilayer. The Cytoplasmic portion of the chain corresponds to 338–351 (QDNGNLGSGNLTPL). Residues 352–372 (GLFFVIFGIGACFGWETGYAI) traverse the membrane as a helical segment. The short motif at 373–375 (NLA) is the NPA 2 element. At 373-403 (NLARDFGPRLMSYFLGYGHEVWSAGNYYFWV) the chain is on the extracellular side. A helical transmembrane segment spans residues 404 to 424 (PMVAPFIGCLFGGWLYDVFIF). Topologically, residues 425–454 (TGESPINTPWMGLKRLMPGGLGSKKVDSKV) are cytoplasmic.

The protein belongs to the MIP/aquaporin (TC 1.A.8) family.

Its subcellular location is the membrane. The enzyme catalyses H2O(in) = H2O(out). It carries out the reaction glycerol(in) = glycerol(out). Functionally, water channel required to facilitate the transport of water across membranes. May play a role in the vegetative growth and pathogenicity. This chain is Aquaglyceroporin-9, found in Botryotinia fuckeliana (strain B05.10) (Noble rot fungus).